A 180-amino-acid polypeptide reads, in one-letter code: Inner membrane-spanning protein YciB (180 aa).

5 helical membrane-spanning segments follow: residues 25 to 45, 54 to 74, 76 to 96, 118 to 138, and 150 to 170; these read QNAT…CYFV, IISV…GNSI, IKIK…MSGI, ITLS…NEIV, and FKVF…LPLL.

Belongs to the YciB family.

It is found in the cell inner membrane. In terms of biological role, plays a role in cell envelope biogenesis, maintenance of cell envelope integrity and membrane homeostasis. This Rickettsia canadensis (strain McKiel) protein is Inner membrane-spanning protein YciB.